A 207-amino-acid chain; its full sequence is Thiamine-phosphate synthase (207 aa).

4-amino-2-methyl-5-(diphosphooxymethyl)pyrimidine contacts are provided by residues Gln-37–Lys-41 and Asn-69. The Mg(2+) site is built by Asp-70 and Asp-89. 4-amino-2-methyl-5-(diphosphooxymethyl)pyrimidine is bound at residue Ser-108. Ser-135–Thr-137 contacts 2-[(2R,5Z)-2-carboxy-4-methylthiazol-5(2H)-ylidene]ethyl phosphate. Lys-138 is a 4-amino-2-methyl-5-(diphosphooxymethyl)pyrimidine binding site. 2-[(2R,5Z)-2-carboxy-4-methylthiazol-5(2H)-ylidene]ethyl phosphate is bound at residue Gly-164.

The protein belongs to the thiamine-phosphate synthase family. The cofactor is Mg(2+).

The enzyme catalyses 2-[(2R,5Z)-2-carboxy-4-methylthiazol-5(2H)-ylidene]ethyl phosphate + 4-amino-2-methyl-5-(diphosphooxymethyl)pyrimidine + 2 H(+) = thiamine phosphate + CO2 + diphosphate. The catalysed reaction is 2-(2-carboxy-4-methylthiazol-5-yl)ethyl phosphate + 4-amino-2-methyl-5-(diphosphooxymethyl)pyrimidine + 2 H(+) = thiamine phosphate + CO2 + diphosphate. It carries out the reaction 4-methyl-5-(2-phosphooxyethyl)-thiazole + 4-amino-2-methyl-5-(diphosphooxymethyl)pyrimidine + H(+) = thiamine phosphate + diphosphate. It participates in cofactor biosynthesis; thiamine diphosphate biosynthesis; thiamine phosphate from 4-amino-2-methyl-5-diphosphomethylpyrimidine and 4-methyl-5-(2-phosphoethyl)-thiazole: step 1/1. Functionally, condenses 4-methyl-5-(beta-hydroxyethyl)thiazole monophosphate (THZ-P) and 2-methyl-4-amino-5-hydroxymethyl pyrimidine pyrophosphate (HMP-PP) to form thiamine monophosphate (TMP). The protein is Thiamine-phosphate synthase of Chromobacterium violaceum (strain ATCC 12472 / DSM 30191 / JCM 1249 / CCUG 213 / NBRC 12614 / NCIMB 9131 / NCTC 9757 / MK).